Consider the following 180-residue polypeptide: Pyruvate synthase subunit PorC (180 aa).

Heterotetramer of one alpha, one beta, one delta and one gamma chain.

The enzyme catalyses 2 oxidized [2Fe-2S]-[ferredoxin] + pyruvate + CoA = 2 reduced [2Fe-2S]-[ferredoxin] + acetyl-CoA + CO2 + H(+). In Methanothermobacter thermautotrophicus (strain ATCC 29096 / DSM 1053 / JCM 10044 / NBRC 100330 / Delta H) (Methanobacterium thermoautotrophicum), this protein is Pyruvate synthase subunit PorC (porC).